A 190-amino-acid chain; its full sequence is Guanylate kinase (190 aa).

The 181-residue stretch at 8–188 folds into the Guanylate kinase-like domain; that stretch reads GRLVILAGPS…AVSAIKAVLL (181 aa). An ATP-binding site is contributed by 15–22; it reads GPSAVGKS.

It belongs to the guanylate kinase family.

It is found in the cytoplasm. The catalysed reaction is GMP + ATP = GDP + ADP. In terms of biological role, essential for recycling GMP and indirectly, cGMP. The sequence is that of Guanylate kinase from Corynebacterium efficiens (strain DSM 44549 / YS-314 / AJ 12310 / JCM 11189 / NBRC 100395).